The sequence spans 1036 residues: Hexagonally packed intermediate-layer surface protein (1036 aa).

The signal sequence occupies residues 1-17 (MKKNIALMALTGVLTLA). 3 cysteine pairs are disulfide-bonded: cysteine 74–cysteine 86, cysteine 256–cysteine 275, and cysteine 642–cysteine 754.

In terms of processing, glycosylated; contains six glycans. Acylated in the N-terminal region. Post-translationally, the N-terminus is blocked.

It is found in the secreted. The protein localises to the cell wall. The protein resides in the S-layer. Functionally, shape maintenance, possible protection from noxious enzymes or exogenous and unsettling DNA, and may mediate homotypic cell-cell contacts. This chain is Hexagonally packed intermediate-layer surface protein (hpi), found in Deinococcus radiodurans.